The following is a 959-amino-acid chain: Ribonucleoside-diphosphate reductase large subunit (959 aa).

Residues Thr-68, 83-84, and Gly-112 contribute to the substrate site; that span reads SC. A disulfide bridge links Cys-84 with Cys-626. Asn-270 acts as the Proton acceptor in catalysis. The 131-residue stretch at 378–508 folds into the DOD-type homing endonuclease domain; that stretch reads LPTLFGNSEH…IQLLLIGMGV (131 aa). Cys-611 serves as the catalytic Cysteine radical intermediate. Glu-613 acts as the Proton acceptor in catalysis. 751-755 is a substrate binding site; the sequence is PTATS.

This sequence belongs to the ribonucleoside diphosphate reductase large chain family. As to quaternary structure, heterotetramer composed of a homodimer of the large subunit (R1) and a homodimer of the small subunit (R2). Larger multisubunit protein complex are also active, composed of (R1)n(R2)n.

It carries out the reaction a 2'-deoxyribonucleoside 5'-diphosphate + [thioredoxin]-disulfide + H2O = a ribonucleoside 5'-diphosphate + [thioredoxin]-dithiol. Under complex allosteric control mediated by deoxynucleoside triphosphates and ATP binding. The type of nucleotide bound at the specificity site determines substrate preference. It seems probable that ATP makes the enzyme reduce CDP and UDP, dGTP favors ADP reduction and dTTP favors GDP reduction. Ribonucleoside-diphosphate reductase holoenzyme provides the precursors necessary for viral DNA synthesis. Allows virus growth in non-dividing cells. Catalyzes the biosynthesis of deoxyribonucleotides from the corresponding ribonucleotides. The polypeptide is Ribonucleoside-diphosphate reductase large subunit (Acheta domesticus (House cricket)).